The primary structure comprises 391 residues: Probable tRNA sulfurtransferase (391 aa).

Residues 60–167 (DETVAALQRV…NKAYVYSNTL (108 aa)) form the THUMP domain. Residues 184 to 185 (LL), 209 to 210 (YF), Arg-266, Gly-288, and Gln-297 each bind ATP.

It belongs to the ThiI family.

The protein resides in the cytoplasm. It carries out the reaction [ThiI sulfur-carrier protein]-S-sulfanyl-L-cysteine + a uridine in tRNA + 2 reduced [2Fe-2S]-[ferredoxin] + ATP + H(+) = [ThiI sulfur-carrier protein]-L-cysteine + a 4-thiouridine in tRNA + 2 oxidized [2Fe-2S]-[ferredoxin] + AMP + diphosphate. The catalysed reaction is [ThiS sulfur-carrier protein]-C-terminal Gly-Gly-AMP + S-sulfanyl-L-cysteinyl-[cysteine desulfurase] + AH2 = [ThiS sulfur-carrier protein]-C-terminal-Gly-aminoethanethioate + L-cysteinyl-[cysteine desulfurase] + A + AMP + 2 H(+). It participates in cofactor biosynthesis; thiamine diphosphate biosynthesis. Its function is as follows. Catalyzes the ATP-dependent transfer of a sulfur to tRNA to produce 4-thiouridine in position 8 of tRNAs, which functions as a near-UV photosensor. Also catalyzes the transfer of sulfur to the sulfur carrier protein ThiS, forming ThiS-thiocarboxylate. This is a step in the synthesis of thiazole, in the thiamine biosynthesis pathway. The sulfur is donated as persulfide by IscS. This Lachnoclostridium phytofermentans (strain ATCC 700394 / DSM 18823 / ISDg) (Clostridium phytofermentans) protein is Probable tRNA sulfurtransferase.